A 458-amino-acid polypeptide reads, in one-letter code: ATP synthase subunit beta (458 aa).

148 to 155 contributes to the ATP binding site; the sequence is GGAGVGKT.

The protein belongs to the ATPase alpha/beta chains family. As to quaternary structure, F-type ATPases have 2 components, CF(1) - the catalytic core - and CF(0) - the membrane proton channel. CF(1) has five subunits: alpha(3), beta(3), gamma(1), delta(1), epsilon(1). CF(0) has three main subunits: a(1), b(2) and c(9-12). The alpha and beta chains form an alternating ring which encloses part of the gamma chain. CF(1) is attached to CF(0) by a central stalk formed by the gamma and epsilon chains, while a peripheral stalk is formed by the delta and b chains.

The protein localises to the cell inner membrane. The enzyme catalyses ATP + H2O + 4 H(+)(in) = ADP + phosphate + 5 H(+)(out). Functionally, produces ATP from ADP in the presence of a proton gradient across the membrane. The catalytic sites are hosted primarily by the beta subunits. The protein is ATP synthase subunit beta of Francisella tularensis subsp. novicida (strain U112).